Consider the following 179-residue polypeptide: Isopentenyl-diphosphate Delta-isomerase (179 aa).

The Mn(2+) site is built by His25 and His31. Residues 29–161 form the Nudix hydrolase domain; the sequence is ELHRAITVYI…PEQFTAWFQL (133 aa). The active site involves Cys66. Cys66 provides a ligand contact to Mg(2+). His68 provides a ligand contact to Mn(2+). Glu86 contributes to the Mg(2+) binding site. Mn(2+)-binding residues include Glu111 and Glu113. Glu113 is an active-site residue.

This sequence belongs to the IPP isomerase type 1 family. Homodimer. It depends on Mg(2+) as a cofactor. Mn(2+) serves as cofactor.

It localises to the cytoplasm. It carries out the reaction isopentenyl diphosphate = dimethylallyl diphosphate. It functions in the pathway isoprenoid biosynthesis; dimethylallyl diphosphate biosynthesis; dimethylallyl diphosphate from isopentenyl diphosphate: step 1/1. Functionally, catalyzes the 1,3-allylic rearrangement of the homoallylic substrate isopentenyl (IPP) to its highly electrophilic allylic isomer, dimethylallyl diphosphate (DMAPP). The polypeptide is Isopentenyl-diphosphate Delta-isomerase (Pectobacterium atrosepticum (strain SCRI 1043 / ATCC BAA-672) (Erwinia carotovora subsp. atroseptica)).